A 353-amino-acid polypeptide reads, in one-letter code: Fe(3+) ions import ATP-binding protein FbpC (353 aa).

Positions 9–239 (VTFQNVRKSF…PASSFIADFM (231 aa)) constitute an ABC transporter domain. 41–48 (GPSGCGKT) is a binding site for ATP.

Belongs to the ABC transporter superfamily. Fe(3+) ion importer (TC 3.A.1.10) family. The complex is composed of two ATP-binding proteins (FbpC), two transmembrane proteins (FbpB) and a solute-binding protein (FbpA).

It is found in the cell inner membrane. The catalysed reaction is Fe(3+)(out) + ATP + H2O = Fe(3+)(in) + ADP + phosphate + H(+). In terms of biological role, part of the ABC transporter complex FbpABC involved in Fe(3+) ions import. Responsible for energy coupling to the transport system. In Rhizobium etli (strain ATCC 51251 / DSM 11541 / JCM 21823 / NBRC 15573 / CFN 42), this protein is Fe(3+) ions import ATP-binding protein FbpC.